A 506-amino-acid polypeptide reads, in one-letter code: Putative basic amino acid antiporter YfcC (506 aa).

A run of 13 helical transmembrane segments spans residues 19–39, 107–127, 148–168, 171–191, 208–228, 231–251, 287–307, 310–330, 352–372, 398–418, 419–439, 442–462, and 485–505; these read LVII…VPVG, GTAV…GIVM, ILFI…FGMG, AVAF…DSIT, WMNP…VLSG, LRIV…MVYA, WLVL…VIVN, FIPE…IIGV, MMIA…LVGN, AVAA…VTSG, SGQA…VGVN, VTVL…PTSA, and LLGL…LMGY.

The protein to H.influenzae HI_0594. This sequence to B.subtilis YcgA.

It is found in the cell inner membrane. Functionally, metabolomic profiling of different yfcC over-expression and deletion strains suggests that it may affect the glyoxylate shunt. This is Putative basic amino acid antiporter YfcC (yfcC) from Escherichia coli (strain K12).